The sequence spans 286 residues: ATP synthase gamma chain (286 aa).

The protein belongs to the ATPase gamma chain family. F-type ATPases have 2 components, CF(1) - the catalytic core - and CF(0) - the membrane proton channel. CF(1) has five subunits: alpha(3), beta(3), gamma(1), delta(1), epsilon(1). CF(0) has three main subunits: a, b and c.

The protein localises to the cell membrane. Its function is as follows. Produces ATP from ADP in the presence of a proton gradient across the membrane. The gamma chain is believed to be important in regulating ATPase activity and the flow of protons through the CF(0) complex. The sequence is that of ATP synthase gamma chain from Ureaplasma urealyticum serovar 10 (strain ATCC 33699 / Western).